The chain runs to 219 residues: Dynein light chain Tctex-type 4 (219 aa).

The tract at residues 1–84 is disordered; the sequence is MAGRPVPAGR…RRPSLGPVPP (84 aa). Basic and acidic residues predominate over residues 10–20; that stretch reads RQEEELAKDPG. Ser-64 is modified (phosphoserine).

Belongs to the dynein light chain Tctex-type family. Interacts with ENG/endoglin, TGFBR2 and TGFBR3. Interacts with PPP1CC.

Its subcellular location is the cell projection. It localises to the cilium. It is found in the flagellum. The protein localises to the cytoplasmic vesicle. The protein resides in the secretory vesicle. Its subcellular location is the acrosome. It localises to the cytoplasm. It is found in the cytoskeleton. The protein localises to the cilium axoneme. The protein resides in the nucleus. Its subcellular location is the microtubule organizing center. The sequence is that of Dynein light chain Tctex-type 4 (DYNLT4) from Sus scrofa (Pig).